The chain runs to 181 residues: ADP-ribosylation factor 1 (181 aa).

The N-myristoyl glycine moiety is linked to residue Gly-2. GTP contacts are provided by residues 24–31 (GLDAAGKT), 67–71 (DVGGQ), and 126–129 (NKQD).

This sequence belongs to the small GTPase superfamily. Arf family. Interacts with AGD7 and GDAP1. GDP-locked form interacts with cytosolic tail of p24 proteins. Interacts with AGD5 at trans-Golgi network. Interacts with A.tumefaciens AK6b.

It localises to the golgi apparatus. Its subcellular location is the endosome. The protein resides in the trans-Golgi network. The protein localises to the early endosome. The enzyme catalyses GTP + H2O = GDP + phosphate + H(+). Activated by AGD7 and AGD10. Functionally, GTP-binding protein involved in protein trafficking; required for the sequence-specific vacuolar sorting route to the lytic vacuole, for the ER-to-Golgi transport and for the Golgi-derived transport to the plasma membrane. Involved in the recruitment of COPI and GDAP1 to membranes. Required for recycling of PIN auxin transporters (e.g. PIN1 and PIN2) in a fungal toxin brefeldin A (BFA)-dependent manner. Involved in various auxin-dependent developmental processes. The chain is ADP-ribosylation factor 1 from Arabidopsis thaliana (Mouse-ear cress).